Reading from the N-terminus, the 569-residue chain is Protein angel homolog 2 (569 aa).

Disordered regions lie at residues 1-22, 63-92, and 109-155; these read MRKG…GVSP, LQHP…WSSW, and GLME…WLRN. Positions 63-72 are enriched in polar residues; the sequence is LQHPSSSFST. A compositionally biased stretch (low complexity) spans 139–150; sequence PPKGSRSPKGSP.

This sequence belongs to the CCR4/nocturin family.

The polypeptide is Protein angel homolog 2 (angel2) (Danio rerio (Zebrafish)).